An 89-amino-acid polypeptide reads, in one-letter code: Small ribosomal subunit protein uS15 (89 aa).

It belongs to the universal ribosomal protein uS15 family. As to quaternary structure, part of the 30S ribosomal subunit. Forms a bridge to the 50S subunit in the 70S ribosome, contacting the 23S rRNA.

Its function is as follows. One of the primary rRNA binding proteins, it binds directly to 16S rRNA where it helps nucleate assembly of the platform of the 30S subunit by binding and bridging several RNA helices of the 16S rRNA. Forms an intersubunit bridge (bridge B4) with the 23S rRNA of the 50S subunit in the ribosome. This chain is Small ribosomal subunit protein uS15, found in Corynebacterium diphtheriae (strain ATCC 700971 / NCTC 13129 / Biotype gravis).